Reading from the N-terminus, the 474-residue chain is Probable CAAX prenyl protease 1 (474 aa).

The next 3 membrane-spanning stretches (helical) occupy residues 103 to 123 (SWFS…IIKY), 196 to 216 (IFVI…SVVV), and 230 to 250 (FIMY…TIAP). Zn(2+) is bound at residue His-332. Residue Glu-333 is part of the active site. Zn(2+) is bound at residue His-336. 2 helical membrane passes run 344 to 364 (INTI…AAFI) and 381 to 401 (VIVG…ILTF). Glu-411 is a Zn(2+) binding site. Asp-415 functions as the Proton donor in the catalytic mechanism.

Belongs to the peptidase M48A family. Zn(2+) is required as a cofactor.

Its subcellular location is the endoplasmic reticulum membrane. The catalysed reaction is Hydrolyzes the peptide bond -P2-(S-farnesyl or geranylgeranyl)C-P1'-P2'-P3'-COOH where P1' and P2' are amino acids with aliphatic side chains and P3' is any C-terminal residue.. In terms of biological role, proteolytically removes the C-terminal three residues of farnesylated proteins. The chain is Probable CAAX prenyl protease 1 from Schizosaccharomyces pombe (strain 972 / ATCC 24843) (Fission yeast).